We begin with the raw amino-acid sequence, 58 residues long: Large ribosomal subunit protein bL32 (58 aa).

This sequence belongs to the bacterial ribosomal protein bL32 family.

The polypeptide is Large ribosomal subunit protein bL32 (Caldicellulosiruptor bescii (strain ATCC BAA-1888 / DSM 6725 / KCTC 15123 / Z-1320) (Anaerocellum thermophilum)).